The chain runs to 974 residues: MTAASPWSVKGIDPKAREVAKDLARRSGMTLGEWLNRMIIEGDGQTADPRLAGDDVPNRAYLEIVKDDAPPRIEIAEHPADEVGRVALALDRLTQRIEAAEGRNAAAITGIDHSVRDALTRLGASEREQIAVAARFEGAVDELKTEQARATERLRRIESEAAGPRSAEALRALEGALGKVAGHLYEGEARTREAIATLEAKLNQQSSGDPSALVEAVVARLGERLEAAETRTSDALRELGASFQALDQRLGAVETANPATGVQEGLDSLAATLTQKMEAARLEMAAKLRESADGRFDRMERKLGEMAAHVQAAEQRSAQAIERMGREIVGVADAFNRRVHAAESRNASAIEQVGGEVARIAASVEHKLNRADSVQAQALEKLGGEIARITEKLAERIGSAERRNALAIDDVGEQVARVTERLNQRHERSSQELVDRIRQSEERTLRMLEEAREKIDSRLSEAQRKLEAAPPSPPPAQAPAPVATAQRPVPPAASPFEDNYFSQAASFSTSEDEADAFDAPPAPARSFEVAEFPAAEPEEPAFAHDDYAIADGFEPESPRYEVEPEVSDFAPAEPSRPMSTRDIIEQARAAARAAAASEGKGGKAKSAKKEKASKASGSLFSGFGGFSTKKSKARLGATVTTALVVFAAAGALGAGVGGLLLLNTDDGNNSPSRVAQAIAGRKADVEVNGPEADTTPGAPRAAVALTTGKVVPAEVEAPAAPPTNEAKALFEDAVRKIESGDRSGVELLKRAANGGYPAAQFYLSKMYEGGKNGVKVDMAEARRWSERAANGGDPRAMHNLALYYFKGEGGPRNSTTAASWFRKAADMGLVDSQFNLAQLYESGLGVSQNPAEAYKWYVIAGRAGDSTARGRATALRSQLTAEAQQTADRSALAFRPQTQVQTASLSSAAPAAANANLGVAQRVLSQLGYYQGPRDGVSSPALRMAIAAYQRDQGLPPTGSVDAETLNRLSVYAR.

Coiled-coil stretches lie at residues D81 to G163, V218 to A320, and Q375 to A469. Disordered stretches follow at residues S460–E497 and A589–K611. The segment covering A589–E598 has biased composition (low complexity). A helical membrane pass occupies residues A642–L662. 3 Sel1-like repeats span residues P757–D793, P794–L829, and V830–D865.

In terms of processing, two isoforms exist, the full-length translation product PodJL and a C-terminal truncated form PodJS. Both appear during a specific time period of the cell cycle to control different aspects of polar organelle development.

Its subcellular location is the membrane. Its function is as follows. PodJL provides the positional information for the localization of several polar organelles (pili, adhesive holdfast and chemotactic apparatus) by recruiting structural (CpaE) and regulatory (PleC) proteins to a specific cell pole. In Caulobacter vibrioides (strain ATCC 19089 / CIP 103742 / CB 15) (Caulobacter crescentus), this protein is Localization factor PodJL (podJ).